The sequence spans 1434 residues: Nitric oxide synthase 1 (1434 aa).

Residues 1–205 form an interaction with NOSIP region; that stretch reads MEDHMFGVQQ…LQGRGENNEL (205 aa). In terms of domain architecture, PDZ spans 17–99; sequence SVRLFKRKVG…ETHVVLILRG (83 aa). Disordered stretches follow at residues 112–192 and 276–302; these read TGDG…KKAT and NNPY…PSKC. Positions 163–245 are interaction with DYNLL1/PIN; it reads YDDGQEAGSL…MGIQVDRDLD (83 aa). Polar residues predominate over residues 285–299; the sequence is PPTSGKQSPTKNGSP. S339 contacts (6R)-L-erythro-5,6,7,8-tetrahydrobiopterin. Residue C420 coordinates heme b. 4 residues coordinate L-arginine: Q483, W592, Y593, and E597. V682, W683, and F696 together coordinate (6R)-L-erythro-5,6,7,8-tetrahydrobiopterin. Y711 contacts heme b. A calmodulin-binding region spans residues 730–750; sequence KRRAIGFKKLAEAVKFSAKLM. Residues 760 to 940 form the Flavodoxin-like domain; sequence ATILYATETG…AFRTWAKKVF (181 aa). Residues T766, E767, T768, K770, S771, S812, T813, and G817 each coordinate FMN. Residues S852, S862, and S863 each carry the phosphoserine modification. 5 residues coordinate FMN: S891, H896, C898, E924, and Q928. Residues 995–1242 enclose the FAD-binding FR-type domain; that stretch reads KRVSAARLLS…VRGAPSFHLP (248 aa). Residue R1015 participates in NADP(+) binding. FAD-binding residues include H1037, R1178, Y1179, Y1180, S1181, T1196, and A1198. S1201 provides a ligand contact to NADP(+). Residues Y1202, V1215, C1216, and S1217 each contribute to the FAD site. Positions 1256, 1289, 1318, 1319, 1325, 1327, 1329, 1362, 1403, and 1405 each coordinate NADP(+).

Belongs to the NOS family. In terms of assembly, homodimer. Interacts with DLG4; the interaction possibly being prevented by the association between NOS1 and CAPON. Forms a ternary complex with CAPON and RASD1. Forms a ternary complex with CAPON and SYN1. Interacts with ZDHHC23. Interacts with NOSIP; which may impair its synaptic location. Interacts with HTR4. Interacts with SLC6A4. Interacts with VAC14. Interacts (via N-terminal domain) with DLG4 (via N-terminal tandem pair of PDZ domains). Interacts with SLC6A4. Forms a complex with ASL, ASS1 and SLC7A1; the complex regulates cell-autonomous L-arginine synthesis and citrulline recycling while channeling extracellular L-arginine to nitric oxide synthesis pathway. Interacts with DMD; localizes NOS1 to sarcolemma in muscle cells. Interacts with DYNLL1; inhibits the nitric oxide synthase activity. Requires heme b as cofactor. The cofactor is FAD. It depends on FMN as a cofactor. (6R)-L-erythro-5,6,7,8-tetrahydrobiopterin serves as cofactor. Ubiquitinated; mediated by STUB1/CHIP in the presence of Hsp70 and Hsp40 (in vitro). In terms of tissue distribution, isoform 1 is ubiquitously expressed: detected in skeletal muscle and brain, also in testis, lung and kidney, and at low levels in heart, adrenal gland and retina. Not detected in the platelets. Isoform 3 is expressed only in testis. Isoform 4 is detected in testis, skeletal muscle, lung, and kidney, at low levels in the brain, but not in the heart and adrenal gland.

It localises to the cell membrane. The protein resides in the sarcolemma. Its subcellular location is the cell projection. The protein localises to the dendritic spine. It carries out the reaction 2 L-arginine + 3 NADPH + 4 O2 + H(+) = 2 L-citrulline + 2 nitric oxide + 3 NADP(+) + 4 H2O. With respect to regulation, stimulated by calcium/calmodulin. Inhibited by DYNLL1 that prevents the dimerization of the protein. Inhibited by NOSIP. Produces nitric oxide (NO) which is a messenger molecule with diverse functions throughout the body. In the brain and peripheral nervous system, NO displays many properties of a neurotransmitter. Probably has nitrosylase activity and mediates cysteine S-nitrosylation of cytoplasmic target proteins such SRR. The polypeptide is Nitric oxide synthase 1 (Homo sapiens (Human)).